We begin with the raw amino-acid sequence, 244 residues long: Myrosinase MB1 (244 aa).

An N-linked (GlcNAc...) asparagine glycan is attached at asparagine 32. Tyrosine 51 lines the substrate pocket. The active-site Nucleophile is glutamate 125. Substrate-binding positions include tryptophan 173 and 180–181; that span reads EF. The N-linked (GlcNAc...) asparagine glycan is linked to asparagine 216.

This sequence belongs to the glycosyl hydrolase 1 family. As to quaternary structure, homodimer. As to expression, in vacuoles called myrosin grains of a certain class of cells, myrosin cells, distributed in the cotyledons and the axis of the embryo as well as in different organs of the growing plant.

It localises to the vacuole. The catalysed reaction is a thioglucoside + H2O = a sugar + a thiol.. Degradation of glucosinolates (glucose residue linked by a thioglucoside bound to an amino acid derivative) to glucose, sulfate and any of the products: thiocyanates, isothiocyanates, nitriles, epithionitriles or oxazolidine-2-thiones. The sequence is that of Myrosinase MB1 from Sinapis alba (White mustard).